Here is a 121-residue protein sequence, read N- to C-terminus: Large ribosomal subunit protein uL18 (121 aa).

It belongs to the universal ribosomal protein uL18 family. As to quaternary structure, part of the 50S ribosomal subunit; part of the 5S rRNA/L5/L18/L25 subcomplex. Contacts the 5S and 23S rRNAs.

Its function is as follows. This is one of the proteins that bind and probably mediate the attachment of the 5S RNA into the large ribosomal subunit, where it forms part of the central protuberance. This is Large ribosomal subunit protein uL18 from Delftia acidovorans (strain DSM 14801 / SPH-1).